Consider the following 226-residue polypeptide: EEF1A lysine methyltransferase 3 (226 aa).

S-adenosyl-L-methionine contacts are provided by residues Trp-57, 83-85 (GAG), Asp-104, Trp-133, and Ala-150.

The protein belongs to the methyltransferase superfamily. METTL21 family. In terms of assembly, interacts with members of the heat shock protein 70 and 90 families and of the TCP-1 chaperonin family, as well as with HSPD1, STIP1 and tubulin; at least some of these proteins may be methylation substrates.

Its subcellular location is the cytoplasm. It localises to the cytoskeleton. The protein resides in the microtubule organizing center. It is found in the centrosome. The catalysed reaction is L-lysyl-[protein] + 3 S-adenosyl-L-methionine = N(6),N(6),N(6)-trimethyl-L-lysyl-[protein] + 3 S-adenosyl-L-homocysteine + 3 H(+). It catalyses the reaction L-lysyl-[protein] + S-adenosyl-L-methionine = N(6)-methyl-L-lysyl-[protein] + S-adenosyl-L-homocysteine + H(+). It carries out the reaction N(6)-methyl-L-lysyl-[protein] + S-adenosyl-L-methionine = N(6),N(6)-dimethyl-L-lysyl-[protein] + S-adenosyl-L-homocysteine + H(+). The enzyme catalyses N(6),N(6)-dimethyl-L-lysyl-[protein] + S-adenosyl-L-methionine = N(6),N(6),N(6)-trimethyl-L-lysyl-[protein] + S-adenosyl-L-homocysteine + H(+). In terms of biological role, protein-lysine methyltransferase that selectively mono-, di- and trimethylates 'Lys-165' of the translation elongation factors EEF1A1 and EEF1A2 in an aminoacyl-tRNA and GTP-dependent manner. EEF1A1 methylation by EEF1AKMT3 is dynamic as well as inducible by stress conditions, such as ER-stress, and plays a regulatory role on mRNA translation. The chain is EEF1A lysine methyltransferase 3 from Bos taurus (Bovine).